Consider the following 101-residue polypeptide: uncharacterized protein (101 aa).

Functionally, may regulate the expression of phage structural components with protein P13. This is an uncharacterized protein from Pseudoalteromonas phage PM2 (Bacteriophage PM2).